The sequence spans 124 residues: Small ribosomal subunit protein uS13 (124 aa).

Residues Val98–Lys124 are disordered.

The protein belongs to the universal ribosomal protein uS13 family. As to quaternary structure, part of the 30S ribosomal subunit. Forms a loose heterodimer with protein S19. Forms two bridges to the 50S subunit in the 70S ribosome.

In terms of biological role, located at the top of the head of the 30S subunit, it contacts several helices of the 16S rRNA. In the 70S ribosome it contacts the 23S rRNA (bridge B1a) and protein L5 of the 50S subunit (bridge B1b), connecting the 2 subunits; these bridges are implicated in subunit movement. Contacts the tRNAs in the A and P-sites. This is Small ribosomal subunit protein uS13 from Dictyoglomus thermophilum (strain ATCC 35947 / DSM 3960 / H-6-12).